The chain runs to 399 residues: Protein DDI1 homolog 2 (399 aa).

One can recognise a Ubiquitin-like domain in the interval 1 to 81 (MLLTVYCVRR…VILRQKENAD (81 aa)). Residues 99-134 (IAVPGTSSPRQRQPPGTQQSHSSPGEITSSPQGLDN) form a disordered region. Positions 103-131 (GTSSPRQRQPPGTQQSHSSPGEITSSPQG) are enriched in polar residues. The residue at position 104 (threonine 104) is a Phosphothreonine. Phosphoserine occurs at positions 106, 121, 128, 150, and 194. Aspartate 252 is a catalytic residue. The Ubiquitin-binding motif lies at 376 to 395 (EEIADQELAEALQKSAEDAE).

Belongs to the DDI1 family. Homodimer. Interacts with MCM6; PCNA; PSMD4; PSMD8; RPA2 and RPN2. Interacts with RTF2.

It is found in the cytoplasm. The protein resides in the cytosol. The protein localises to the chromosome. In terms of biological role, aspartic protease that mediates the cleavage of NFE2L1/NRF1 at 'Leu-104', thereby promoting release of NFE2L1/NRF1 from the endoplasmic reticulum membrane. Ubiquitination of NFE2L1/NRF1 is a prerequisite for cleavage, suggesting that DDI2 specifically recognizes and binds ubiquitinated NFE2L1/NRF1. Seems to act as a proteasomal shuttle which links the proteasome and replication fork proteins like RTF2. Required, with DDI1, for cellular survival following replication stress. Together or redudantly with DDI1, removes RTF2 from stalled forks to allow cell cycle progression after replication stress and maintains genome integrity. This chain is Protein DDI1 homolog 2, found in Homo sapiens (Human).